The chain runs to 125 residues: Actin, alpha skeletal muscle (125 aa).

The protein belongs to the actin family. In terms of assembly, polymerization of globular actin (G-actin) leads to a structural filament (F-actin) in the form of a two-stranded helix. Each actin can bind to 4 others. In terms of processing, methylated at His-75 by SETD3.

The protein localises to the cytoplasm. The protein resides in the cytoskeleton. Its function is as follows. Actins are highly conserved proteins that are involved in various types of cell motility and are ubiquitously expressed in all eukaryotic cells. The polypeptide is Actin, alpha skeletal muscle (Pleurodeles waltl (Iberian ribbed newt)).